A 673-amino-acid polypeptide reads, in one-letter code: Bifunctional lycopene cyclase/phytoene synthase (673 aa).

The segment at 1 to 251 (MTALAYYQIH…IVLGLSACDH (251 aa)) is lycopene beta-cyclase. 7 helical membrane-spanning segments follow: residues 9-29 (IHLI…SPIL), 36-56 (KISI…SWII), 81-101 (YEEY…YVLA), 117-137 (SALS…LFTA), 157-177 (LSLL…EYAF), 187-207 (TIAA…VAVG), and 226-246 (VLPI…VLGL). Residues 258–673 (LHGRTIYGNK…SVVMSGWEGQ (416 aa)) are phytoene synthase. The disordered stretch occupies residues 376–399 (KILSSPLLPPSHPSRPTGMYPLPP).

The protein in the N-terminal section; belongs to the lycopene beta-cyclase family. In the C-terminal section; belongs to the phytoene/squalene synthase family.

It is found in the membrane. It carries out the reaction all-trans-lycopene = gamma-carotene. The catalysed reaction is gamma-carotene = all-trans-beta-carotene. It catalyses the reaction 2 (2E,6E,10E)-geranylgeranyl diphosphate = 15-cis-phytoene + 2 diphosphate. It participates in carotenoid biosynthesis; beta-carotene biosynthesis. It functions in the pathway carotenoid biosynthesis; phytoene biosynthesis; all-trans-phytoene from geranylgeranyl diphosphate: step 1/1. In terms of biological role, bifunctional enzyme that catalyzes the reactions from geranylgeranyl diphosphate to phytoene (phytoene synthase) and lycopene to beta-carotene via the intermediate gamma-carotene (lycopene cyclase). The cyclase preferentially catalyzes the symmetric cyclization of both ends of the substrate to produce dicyclic carotenoids. Beta-carotene is further processed to the acidic carotenoid astaxanthin. The protein is Bifunctional lycopene cyclase/phytoene synthase of Phaffia rhodozyma (Yeast).